The sequence spans 420 residues: L-cysteine:1D-myo-inositol 2-amino-2-deoxy-alpha-D-glucopyranoside ligase (420 aa).

C48 contacts Zn(2+). L-cysteinyl-5'-AMP-binding positions include 48–51 (CGIT), T63, and 86–88 (NIT). Positions 50–60 (ITPYDSTHLGH) match the 'HIGH' region motif. The 'ERGGDP' region motif lies at 192–197 (ERGGDP). Residue W232 coordinates L-cysteinyl-5'-AMP. A Zn(2+)-binding site is contributed by C236. 254 to 256 (GSD) contacts L-cysteinyl-5'-AMP. H261 is a Zn(2+) binding site. Residue I288 participates in L-cysteinyl-5'-AMP binding. Residues 294-298 (KMSKS) carry the 'KMSKS' region motif.

It belongs to the class-I aminoacyl-tRNA synthetase family. MshC subfamily. As to quaternary structure, monomer. Zn(2+) serves as cofactor.

The enzyme catalyses 1D-myo-inositol 2-amino-2-deoxy-alpha-D-glucopyranoside + L-cysteine + ATP = 1D-myo-inositol 2-(L-cysteinylamino)-2-deoxy-alpha-D-glucopyranoside + AMP + diphosphate + H(+). Its function is as follows. Catalyzes the ATP-dependent condensation of GlcN-Ins and L-cysteine to form L-Cys-GlcN-Ins. The polypeptide is L-cysteine:1D-myo-inositol 2-amino-2-deoxy-alpha-D-glucopyranoside ligase (Corynebacterium glutamicum (strain R)).